We begin with the raw amino-acid sequence, 318 residues long: 2-keto-3-deoxygluconate permease (318 aa).

A run of 10 helical transmembrane segments spans residues 10 to 30 (LPGG…TLWP), 42 to 62 (GLIS…GATI), 82 to 102 (IAVA…GGIP), 109 to 129 (LSVL…YAAL), 139 to 159 (AGAV…LILG), 163 to 183 (LATF…LGFA), 201 to 221 (TLVP…TIVH), 224 to 244 (ASGV…LLLA), 257 to 277 (VAAS…AGMA), and 288 to 308 (TALV…LTAL).

It belongs to the KdgT transporter family.

It localises to the cell inner membrane. The catalysed reaction is 2-dehydro-3-deoxy-D-gluconate(in) + H(+)(in) = 2-dehydro-3-deoxy-D-gluconate(out) + H(+)(out). Catalyzes the proton-dependent uptake of 2-keto-3-deoxygluconate (KDG) into the cell. The chain is 2-keto-3-deoxygluconate permease from Xanthomonas oryzae pv. oryzae (strain MAFF 311018).